Consider the following 348-residue polypeptide: D-alanine--D-alanine ligase (348 aa).

The ATP-grasp domain maps to 132-334 (KRVLESIGIP…YPDLIEELVT (203 aa)). 162-217 (LARLTFPIFVKPANMGSSVGISKAQTKVELRKAIQLALTYDSRVLIEQGVVAREIE) lines the ATP pocket. Residues Asp288, Glu301, and Asn303 each contribute to the Mg(2+) site.

It belongs to the D-alanine--D-alanine ligase family. It depends on Mg(2+) as a cofactor. Mn(2+) is required as a cofactor.

Its subcellular location is the cytoplasm. It carries out the reaction 2 D-alanine + ATP = D-alanyl-D-alanine + ADP + phosphate + H(+). It participates in cell wall biogenesis; peptidoglycan biosynthesis. Its function is as follows. Cell wall formation. This Streptococcus pyogenes serotype M18 (strain MGAS8232) protein is D-alanine--D-alanine ligase.